The chain runs to 302 residues: MDVLRTPDERFEGLADWSFAPHYTEVTDADGTALRIHHVDEGPKDQRPILLMHGEPSWAYLYRKVIAELVAKGHRVVAPDLVGFGRSDKPAKRTDYTYERHVAWMSAWLEQNDLKDIVLFCQDWGGLIGLRLVAAFPERFSAVVVSNTGLPIGVGKSEGFEAWLNFSQNTPELPVGFILNGGTARDLSDAERSAYDAPFPDESYKEGARIFPALVPITPEHASVEENKAAWAVLETFDKPFVTAFSDADPITRGGEAMFLARVPGTKNVAHTTLKGGHFVQEDSPVEIAALLDGLVAGLPQA.

The region spanning proline 48–isoleucine 152 is the AB hydrolase-1 domain. The active-site Nucleophile is aspartate 123. The active-site Proton donor is aspartate 249. Histidine 278 serves as the catalytic Proton acceptor.

Belongs to the haloalkane dehalogenase family. Type 1 subfamily. Monomer.

It carries out the reaction 1-haloalkane + H2O = a halide anion + a primary alcohol + H(+). Functionally, catalyzes hydrolytic cleavage of carbon-halogen bonds in halogenated aliphatic compounds, leading to the formation of the corresponding primary alcohols, halide ions and protons. The chain is Haloalkane dehalogenase from Caulobacter vibrioides (strain ATCC 19089 / CIP 103742 / CB 15) (Caulobacter crescentus).